The chain runs to 317 residues: Acetyl-coenzyme A carboxylase carboxyl transferase subunit alpha (317 aa).

The 255-residue stretch at Arg39–Gly293 folds into the CoA carboxyltransferase C-terminal domain.

It belongs to the AccA family. Acetyl-CoA carboxylase is a heterohexamer composed of biotin carboxyl carrier protein (AccB), biotin carboxylase (AccC) and two subunits each of ACCase subunit alpha (AccA) and ACCase subunit beta (AccD).

Its subcellular location is the cytoplasm. The catalysed reaction is N(6)-carboxybiotinyl-L-lysyl-[protein] + acetyl-CoA = N(6)-biotinyl-L-lysyl-[protein] + malonyl-CoA. It functions in the pathway lipid metabolism; malonyl-CoA biosynthesis; malonyl-CoA from acetyl-CoA: step 1/1. Component of the acetyl coenzyme A carboxylase (ACC) complex. First, biotin carboxylase catalyzes the carboxylation of biotin on its carrier protein (BCCP) and then the CO(2) group is transferred by the carboxyltransferase to acetyl-CoA to form malonyl-CoA. The sequence is that of Acetyl-coenzyme A carboxylase carboxyl transferase subunit alpha from Methylobacterium sp. (strain 4-46).